We begin with the raw amino-acid sequence, 236 residues long: Orotidine 5'-phosphate decarboxylase (236 aa).

Substrate is bound by residues aspartate 13, lysine 35, 62–71 (DLKFYDIPQT), threonine 123, arginine 184, glutamine 193, glycine 213, and arginine 214. The active-site Proton donor is lysine 64.

This sequence belongs to the OMP decarboxylase family. Type 1 subfamily. Homodimer.

The enzyme catalyses orotidine 5'-phosphate + H(+) = UMP + CO2. The protein operates within pyrimidine metabolism; UMP biosynthesis via de novo pathway; UMP from orotate: step 2/2. Catalyzes the decarboxylation of orotidine 5'-monophosphate (OMP) to uridine 5'-monophosphate (UMP). The chain is Orotidine 5'-phosphate decarboxylase from Coxiella burnetii (strain CbuK_Q154) (Coxiella burnetii (strain Q154)).